Reading from the N-terminus, the 1103-residue chain is Ubiquitin carboxyl-terminal hydrolase 7 (1103 aa).

The span at 1 to 11 (MNHQQQQQQQQ) shows a compositional bias: low complexity. Disordered stretches follow at residues 1-41 (MNHQ…TQNP) and 46-65 (NVTL…DDTS). Residues 1 to 209 (MNHQQQQQQQ…APHGVAWDSK (209 aa)) form an interaction with TSPYL5 region. Position 19 is a phosphoserine (serine 19). Residues 20 to 32 (EPEDMEMEAGDTD) show a composition bias toward acidic residues. Serine 50 and serine 54 each carry phosphoserine. The segment at 54-209 (SNAEEDMEDD…APHGVAWDSK (156 aa)) is interaction with p53/TP53 and MDM2. The region spanning 69-196 (EATFQFTVER…DDKVTFEVFV (128 aa)) is the MATH domain. Positions 71 to 206 (TFQFTVERFS…QADAPHGVAW (136 aa)) are necessary for nuclear localization. Residues 215 to 522 (VGLKNQGATC…NAYMLVYIRE (308 aa)) form the USP domain. The Nucleophile role is filled by cysteine 224. Histidine 465 functions as the Proton acceptor in the catalytic mechanism. Lysine 870 bears the N6-acetyllysine; alternate mark. Lysine 870 is covalently cross-linked (Glycyl lysine isopeptide (Lys-Gly) (interchain with G-Cter in SUMO2); alternate). Residue lysine 870 forms a Glycyl lysine isopeptide (Lys-Gly) (interchain with G-Cter in ubiquitin); alternate linkage. Lysine 883 is covalently cross-linked (Glycyl lysine isopeptide (Lys-Gly) (interchain with G-Cter in SUMO2)). The residue at position 964 (serine 964) is a Phosphoserine. An N6-acetyllysine mark is found at lysine 1085 and lysine 1097.

The protein belongs to the peptidase C19 family. In terms of assembly, monomer. Homodimer. Part of a complex with DAXX, MDM2, RASSF1 and USP7. Part of a complex with DAXX, MDM2 and USP7. Interacts with MDM2; the interaction is independent of p53/TP53. Interacts with DAXX; the interaction is direct and independent of MDM2 and p53/TP53. Component of a complex composed of KMT2E, OGT and USP7; the complex stabilizes KMT2E, preventing KMT2E ubiquitination and proteasomal-mediated degradation. Interacts (via MATH domain) with KMT2E. Interacts with OGT. Interacts with FOXO4; the interaction is enhanced in presence of hydrogen peroxide and occurs independently of p53/TP53. Interacts with p53/TP53; the interaction is enhanced in response to DNA damage; the interaction is impaired by TSPYL5. Interacts with PTEN; the interaction is direct. Interacts with ATXN1 and the strength of interaction is influenced by the length of the poly-Gln region in ATXN1. A weaker interaction seen with mutants having longer poly-Gln regions. Interacts with KIAA1530/UVSSA. Interacts with MEX3C and antagonizes its ability to degrade mRNA. Interacts with DNMT1 and UHRF1. Interacts with FOXP3. Interacts (via MATH domain) with RNF220. Associated component of the Polycomb group (PcG) multiprotein PRC1-like complex. Interacts with EPOP. Interacts with OTUD4 and USP9X; the interaction is direct. Interacts with CRY2. Interacts with REST. Interacts with ERCC6. Part of a complex consisting of USP7, MAGEL2 and TRIM27; directly interacts with MAGEL2; directly interacts with TRIM27. Polyneddylated. In terms of processing, not sumoylated. Post-translationally, polyubiquitinated. Ubiquitinated at Lys-870. In terms of tissue distribution, widely expressed. High expression is detected in brain, bone marrow, thymus and testis.

It localises to the nucleus. The protein resides in the cytoplasm. Its subcellular location is the PML body. The protein localises to the chromosome. The enzyme catalyses Thiol-dependent hydrolysis of ester, thioester, amide, peptide and isopeptide bonds formed by the C-terminal Gly of ubiquitin (a 76-residue protein attached to proteins as an intracellular targeting signal).. Functionally, hydrolase that deubiquitinates target proteins such as ARMC5, FOXO4, DEPTOR, KAT5, p53/TP53, MDM2, ERCC6, DNMT1, UHRF1, PTEN, KMT2E/MLL5 and DAXX. Together with DAXX, prevents MDM2 self-ubiquitination and enhances the E3 ligase activity of MDM2 towards p53/TP53, thereby promoting p53/TP53 ubiquitination and proteasomal degradation. Deubiquitinates p53/TP53, preventing degradation of p53/TP53, and enhances p53/TP53-dependent transcription regulation, cell growth repression and apoptosis. Deubiquitinates p53/TP53 and MDM2 and strongly stabilizes p53/TP53 even in the presence of excess MDM2, and also induces p53/TP53-dependent cell growth repression and apoptosis. Deubiquitination of FOXO4 in presence of hydrogen peroxide is not dependent on p53/TP53 and inhibits FOXO4-induced transcriptional activity. In association with DAXX, is involved in the deubiquitination and translocation of PTEN from the nucleus to the cytoplasm, both processes that are counteracted by PML. Deubiquitinates KMT2E preventing KMT2E proteasomal-mediated degradation. Involved in cell proliferation during early embryonic development. Involved in transcription-coupled nucleotide excision repair (TC-NER) in response to UV damage: recruited to DNA damage sites following interaction with KIAA1530/UVSSA and promotes deubiquitination of ERCC6, preventing UV-induced degradation of ERCC6. Involved in maintenance of DNA methylation via its interaction with UHRF1 and DNMT1: acts by mediating deubiquitination of UHRF1 and DNMT1, preventing their degradation and promoting DNA methylation by DNMT1. Deubiquitinates alkylation repair enzyme ALKBH3. OTUD4 recruits USP7 and USP9X to stabilize ALKBH3, thereby promoting the repair of alkylated DNA lesions. Acts as a chromatin regulator via its association with the Polycomb group (PcG) multiprotein PRC1-like complex; may act by deubiquitinating components of the PRC1-like complex. Able to mediate deubiquitination of histone H2B; it is however unsure whether this activity takes place in vivo. Exhibits a preference towards 'Lys-48'-linked ubiquitin chains. Increases regulatory T-cells (Treg) suppressive capacity by deubiquitinating and stabilizing the transcription factor FOXP3 which is crucial for Treg cell function. Plays a role in the maintenance of the circadian clock periodicity via deubiquitination and stabilization of the CRY1 and CRY2 proteins. Deubiquitinates REST, thereby stabilizing REST and promoting the maintenance of neural progenitor cells. Deubiquitinates SIRT7, inhibiting SIRT7 histone deacetylase activity and regulating gluconeogenesis. Involved in the regulation of WASH-dependent actin polymerization at the surface of endosomes and the regulation of endosomal protein recycling. It maintains optimal WASH complex activity and precise F-actin levels via deubiquitination of TRIM27 and WASHC1. Mediates the deubiquitination of phosphorylated DEPTOR, promoting its stability and leading to decreased mTORC1 signaling. The sequence is that of Ubiquitin carboxyl-terminal hydrolase 7 (Usp7) from Mus musculus (Mouse).